The primary structure comprises 475 residues: MPAQTESKTTTEFKAGVKDYKITYYTPDYKVSDTDVLAAFRMTPQTGVTPEECGAAVAAESSTGTWTTVWTDGLTQLDRYKGRCYDIEPVYGECDQYIAYIAYPIELFEEGSVTNLLTSIVGNVFGFKALRALRLEDLRIPACYLKSFWGPPHGIEVERDKLCKYGRGLLGCTIKPKLGLSAKNYGRAVYECLRGGLDFTKDDENVTSQAFMRWRDRFLFCAEAIYKAQKESGEVKGHYLNVTAGNCEEMYKRADYAVKLGVPIIMHDFLTGGFTANTSLSNYCRNNGLLLHIHRAMHAVIDRQRNHGIHFRVLAKTLRMSGGDHLHSGTVVGKLEGDRAGTYGFINLMRQNLIYRDRACGVYFAQDWCGLASLMPVASGGIHVWHMPALLDIFGDDTCFQFGGGTLGHPWGNASGAVANRVALEACTQARNEGKSLVKYGADIIREACKYSRELAAACDVWKEVTFNFDTVDKL.

Position 14 is an N6,N6,N6-trimethyllysine (Lys-14). Asn-123 and Thr-173 together coordinate substrate. Catalysis depends on Lys-175, which acts as the Proton acceptor. Lys-177 provides a ligand contact to substrate. Residues Lys-201, Asp-203, and Glu-204 each contribute to the Mg(2+) site. Residue Lys-201 is modified to N6-carboxylysine. His-294 (proton acceptor) is an active-site residue. Substrate is bound by residues Arg-295, His-327, and Ser-379.

This sequence belongs to the RuBisCO large chain family. Type I subfamily. As to quaternary structure, heterohexadecamer of 8 large chains and 8 small chains; disulfide-linked. The disulfide link is formed within the large subunit homodimers. Mg(2+) serves as cofactor. In terms of processing, the disulfide bond which can form in the large chain dimeric partners within the hexadecamer appears to be associated with oxidative stress and protein turnover.

The protein localises to the plastid. The catalysed reaction is 2 (2R)-3-phosphoglycerate + 2 H(+) = D-ribulose 1,5-bisphosphate + CO2 + H2O. The enzyme catalyses D-ribulose 1,5-bisphosphate + O2 = 2-phosphoglycolate + (2R)-3-phosphoglycerate + 2 H(+). RuBisCO catalyzes two reactions: the carboxylation of D-ribulose 1,5-bisphosphate, the primary event in carbon dioxide fixation, as well as the oxidative fragmentation of the pentose substrate in the photorespiration process. Both reactions occur simultaneously and in competition at the same active site. The polypeptide is Ribulose bisphosphate carboxylase large chain (rbcL) (Euglena longa (Euglenophycean alga)).